A 134-amino-acid chain; its full sequence is Galectin-1 (134 aa).

The residue at position 1 (Ala-1) is an N-acetylalanine. The region spanning 4 to 134 (GVAVTNLNLK…GLAFKSITTE (131 aa)) is the Galectin domain. A beta-D-galactoside is bound by residues 45–49 (HFNAR), His-53, Asn-62, and 69–72 (WGSE).

As to quaternary structure, homodimer.

It is found in the secreted. The protein resides in the extracellular space. It localises to the extracellular matrix. May regulate cell apoptosis and cell differentiation. Binds beta-galactoside and a wide array of complex carbohydrates. The chain is Galectin-1 from Rhinella arenarum (Argentine common toad).